The primary structure comprises 322 residues: Prephenate dehydratase (322 aa).

The Prephenate dehydratase domain occupies 5 to 191; that stretch reads RIAYLGPEGT…ARTRFVLVGM (187 aa). One can recognise an ACT domain in the interval 205–282; sequence SAVLRIDNAP…ADVCYLGSWP (78 aa). The interval 286-322 is disordered; sequence ATGPTVSPPPPDEASRWLARLRAGKPDQASEPGGGKL.

As to quaternary structure, homodimer.

The catalysed reaction is prephenate + H(+) = 3-phenylpyruvate + CO2 + H2O. Its pathway is amino-acid biosynthesis; L-phenylalanine biosynthesis; phenylpyruvate from prephenate: step 1/1. This is Prephenate dehydratase (pheA) from Mycobacterium leprae (strain Br4923).